Here is a 36-residue protein sequence, read N- to C-terminus: Pollen allergen Dac g 2 (36 aa).

Belongs to the expansin family. Expansin B subfamily.

Its subcellular location is the secreted. The chain is Pollen allergen Dac g 2 from Dactylis glomerata (Orchard grass).